A 648-amino-acid chain; its full sequence is MEFIVSLLLLSPALVAGSLHSRIDNGLARTPQMGWNSYNYYSCSPNEAIIRSNAKALVDLGLAELGYRYVTTDCGWSVADRLPNGTLTWNETLFPSGFPAMGEYLHELGLLFGVYGDSGTKLCGSPPDQVGSLYHEEQDAKTFAEWGADSLKYDNCYSDAATNYPNVNYEPSTSPRPRYEIMSSALARVGRPILFQICEWGIDFPALWAPALGNSWRIGNDIIPAWRSIFRTLNQAVPNTDFAGPGQWADLDMLYVGNGVFSLPEEQTHFSLWAILKSPLTIGAALKDDDTSISQASLEVLKQKDVIGFNQDALGVSASLKRRWSDEGYEVWSGPLSGNRTVVAVINWRNESRDLTLDLPDVGLQYAQVARNIWGKTVVRDVRTSYTAGVAGHGTILLELQGTLPSGLYPAKIFAKSTGQRSTFESIYAATTSANYELAITFSRPSTETVTITTSSGQTVSISGKSGRIALTAGSNTITIQHKTPIESIQITPPTGTYYANTVFNVTGSAKHTTCGSGCSPVGSKIGYLSPTSNAYTSISTTTAGSKYLAIDYINNEVAFSSSWGWGSNSRNLTVSVNDGAPVRLEVPLSGRHSELYSPGKGWWDTATLGVLTSGWKKGENKVVFGNEGGEDGFQTYAADFVGVRVLD.

Positions 1 to 16 (MEFIVSLLLLSPALVA) are cleaved as a signal peptide. N-linked (GlcNAc...) asparagine glycans are attached at residues N84 and N90. The cysteines at positions 123 and 156 are disulfide-linked. The active-site Nucleophile is D154. 199-203 (EWGID) is a binding site for substrate. D221 (proton donor) is an active-site residue. 4 N-linked (GlcNAc...) asparagine glycosylation sites follow: N339, N350, N505, and N572.

It belongs to the glycosyl hydrolase 27 family.

Its subcellular location is the secreted. It carries out the reaction Hydrolysis of terminal, non-reducing alpha-D-galactose residues in alpha-D-galactosides, including galactose oligosaccharides, galactomannans and galactolipids.. Hydrolyzes a variety of simple alpha-D-galactoside as well as more complex molecules such as oligosaccharides and polysaccharides. In Aspergillus fumigatus (strain CBS 144.89 / FGSC A1163 / CEA10) (Neosartorya fumigata), this protein is Probable alpha-galactosidase D (aglD).